The chain runs to 1008 residues: Pre-mRNA-splicing factor SNU114 (1008 aa).

Phosphoserine is present on Ser85. A Phosphothreonine modification is found at Thr88. The region spanning 131–338 (ERIINVGVIG…SYYYAHSIPS (208 aa)) is the tr-type G domain. Residues 140–147 (GPLHSGKT) form a G1 region. 140–147 (GPLHSGKT) is a binding site for GTP. Residues 188-192 (GLSIK) are G2. The segment at 214-217 (DAPG) is G3. Residues 214–218 (DAPGH) and 268–271 (NKLD) each bind GTP. The tract at residues 268–271 (NKLD) is G4. The interval 315–317 (STK) is G5. Residues 504–536 (TSQSESRQKRQLHDISKTETSNEDEDEDDETPS) are disordered. The span at 509–520 (SRQKRQLHDISK) shows a compositional bias: basic and acidic residues. Positions 524 to 536 (SNEDEDEDDETPS) are enriched in acidic residues.

Belongs to the TRAFAC class translation factor GTPase superfamily. Classic translation factor GTPase family. EF-G/EF-2 subfamily. As to quaternary structure, belongs to the CWC complex (or CEF1-associated complex), a spliceosome sub-complex reminiscent of a late-stage spliceosome composed of the U2, U5 and U6 snRNAs and at least BUD13, BUD31, BRR2, CDC40, CEF1, CLF1, CUS1, CWC2, CWC15, CWC21, CWC22, CWC23, CWC24, CWC25, CWC27, ECM2, HSH155, IST3, ISY1, LEA1, MSL1, NTC20, PRP8, PRP9, PRP11, PRP19, PRP21, PRP22, PRP45, PRP46, SLU7, SMB1, SMD1, SMD2, SMD3, SMX2, SMX3, SNT309, SNU114, SPP2, SYF1, SYF2, RSE1 and YJU2. Component of the U4/U6-U5 tri-snRNP complex composed of the U4, U6 and U5 snRNAs and at least PRP3, PRP4, PRP6, PRP8, PRP18, PRP31, PRP38, SNU13, SNU23, SNU66, SNU114, SPP381, SMB1, SMD1, SMD2, SMD3, SMX2, SMX3, LSM2, LSM3, LSM4, LSM5, LSM6, LSM7, LSM8, BRR2 and DIB1. Interacts (via C-terminus) with CWC21. Interacts (via N-terminus) with PRP8 (via SCwid domain).

The protein localises to the nucleus. In terms of biological role, component of the U5 snRNP complex required for pre-mRNA splicing. Binds GTP. The sequence is that of Pre-mRNA-splicing factor SNU114 (SNU114) from Saccharomyces cerevisiae (strain ATCC 204508 / S288c) (Baker's yeast).